Here is a 106-residue protein sequence, read N- to C-terminus: Flagellar transcriptional regulator FlhD (106 aa).

Belongs to the FlhD family. As to quaternary structure, homodimer; disulfide-linked. Forms a heterohexamer composed of two FlhC and four FlhD subunits. Each FlhC binds a FlhD dimer, forming a heterotrimer, and a hexamer assembles by dimerization of two heterotrimers.

The protein localises to the cytoplasm. Functionally, functions in complex with FlhC as a master transcriptional regulator that regulates transcription of several flagellar and non-flagellar operons by binding to their promoter region. Activates expression of class 2 flagellar genes, including fliA, which is a flagellum-specific sigma factor that turns on the class 3 genes. Also regulates genes whose products function in a variety of physiological pathways. The polypeptide is Flagellar transcriptional regulator FlhD (Burkholderia mallei (strain SAVP1)).